The chain runs to 128 residues: Sulfurtransferase TusD (128 aa).

Residue Cys-78 is the Cysteine persulfide intermediate of the active site.

This sequence belongs to the DsrE/TusD family. Heterohexamer, formed by a dimer of trimers. The hexameric TusBCD complex contains 2 copies each of TusB, TusC and TusD. The TusBCD complex interacts with TusE.

It is found in the cytoplasm. Functionally, part of a sulfur-relay system required for 2-thiolation of 5-methylaminomethyl-2-thiouridine (mnm(5)s(2)U) at tRNA wobble positions. Accepts sulfur from TusA and transfers it in turn to TusE. The sequence is that of Sulfurtransferase TusD from Enterobacter sp. (strain 638).